Here is a 431-residue protein sequence, read N- to C-terminus: UDP-N-acetylglucosamine 1-carboxyvinyltransferase (431 aa).

25 to 26 (KN) contributes to the phosphoenolpyruvate binding site. UDP-N-acetyl-alpha-D-glucosamine is bound at residue R101. C125 functions as the Proton donor in the catalytic mechanism. At C125 the chain carries 2-(S-cysteinyl)pyruvic acid O-phosphothioketal. 2 residues coordinate UDP-N-acetyl-alpha-D-glucosamine: D317 and I339.

Belongs to the EPSP synthase family. MurA subfamily.

The protein localises to the cytoplasm. The catalysed reaction is phosphoenolpyruvate + UDP-N-acetyl-alpha-D-glucosamine = UDP-N-acetyl-3-O-(1-carboxyvinyl)-alpha-D-glucosamine + phosphate. It participates in cell wall biogenesis; peptidoglycan biosynthesis. In terms of biological role, cell wall formation. Adds enolpyruvyl to UDP-N-acetylglucosamine. The chain is UDP-N-acetylglucosamine 1-carboxyvinyltransferase from Thermobifida fusca (strain YX).